A 96-amino-acid polypeptide reads, in one-letter code: Co-chaperonin GroES (96 aa).

Belongs to the GroES chaperonin family. As to quaternary structure, heptamer of 7 subunits arranged in a ring. Interacts with the chaperonin GroEL.

It is found in the cytoplasm. Together with the chaperonin GroEL, plays an essential role in assisting protein folding. The GroEL-GroES system forms a nano-cage that allows encapsulation of the non-native substrate proteins and provides a physical environment optimized to promote and accelerate protein folding. GroES binds to the apical surface of the GroEL ring, thereby capping the opening of the GroEL channel. This Allochromatium vinosum (Chromatium vinosum) protein is Co-chaperonin GroES.